We begin with the raw amino-acid sequence, 146 residues long: Large ribosomal subunit protein uL15 (146 aa).

Basic and acidic residues predominate over residues 1-13 (MKLHELKPAEGSR). The segment at 1-57 (MKLHELKPAEGSRKVRNRVGRGTSSGNGKTSGRGQKGQKARSGVGLRPGFEGGQTPL) is disordered. Residues 23-35 (TSSGNGKTSGRGQ) are compositionally biased toward gly residues.

The protein belongs to the universal ribosomal protein uL15 family. As to quaternary structure, part of the 50S ribosomal subunit.

Binds to the 23S rRNA. This chain is Large ribosomal subunit protein uL15, found in Streptococcus thermophilus (strain CNRZ 1066).